Consider the following 393-residue polypeptide: Phospholipase A1-II 1 (393 aa).

A coiled-coil region spans residues Gln200–Thr220. The active-site Acyl-ester intermediate is the Ser225. Active-site charge relay system residues include Ser225, Asp284, and His321.

This sequence belongs to the AB hydrolase superfamily. Lipase family.

The protein resides in the cytoplasm. In terms of biological role, acylhydrolase that catalyzes the hydrolysis of phospholipids at the sn-1 position. This chain is Phospholipase A1-II 1, found in Oryza sativa subsp. indica (Rice).